The primary structure comprises 222 residues: 7-cyano-7-deazaguanine synthase (222 aa).

An ATP-binding site is contributed by 11 to 21 (FSGGQDSTTCL). The Zn(2+) site is built by C187, C195, C198, and C201.

The protein belongs to the QueC family. Zn(2+) serves as cofactor.

The enzyme catalyses 7-carboxy-7-deazaguanine + NH4(+) + ATP = 7-cyano-7-deazaguanine + ADP + phosphate + H2O + H(+). Its pathway is purine metabolism; 7-cyano-7-deazaguanine biosynthesis. In terms of biological role, catalyzes the ATP-dependent conversion of 7-carboxy-7-deazaguanine (CDG) to 7-cyano-7-deazaguanine (preQ(0)). The protein is 7-cyano-7-deazaguanine synthase of Actinobacillus pleuropneumoniae serotype 5b (strain L20).